The primary structure comprises 451 residues: uncharacterized protein (451 aa).

Residues 2–60 (VVKVKQKIPLKIKRMGINGEGIGFYQKTLVFVPGALKGEDIFCQITAVKRNFAEAKLLT) enclose the TRAM domain. 4 residues coordinate [4Fe-4S] cluster: C73, C79, C82, and C162. S-adenosyl-L-methionine contacts are provided by Q283, Y312, D333, and D381. Residue C408 is the Nucleophile of the active site.

The protein belongs to the class I-like SAM-binding methyltransferase superfamily. RNA M5U methyltransferase family.

This is an uncharacterized protein from Streptococcus pyogenes serotype M1.